The sequence spans 59 residues: Small ribosomal subunit protein eS30 (59 aa).

The disordered stretch occupies residues 1 to 35; it reads KVHGSLARAGKVRGQTPKVAKQEKKKKKTGRAKRR. Residues 23–35 show a composition bias toward basic residues; it reads EKKKKKTGRAKRR. Lys51 is subject to N6-succinyllysine.

The protein belongs to the eukaryotic ribosomal protein eS30 family.

This is Small ribosomal subunit protein eS30 (Fau) from Mus spicilegus (Steppe mouse).